Consider the following 236-residue polypeptide: 7-cyano-7-deazaguanine synthase (236 aa).

An ATP-binding site is contributed by 13-23 (FSGGQDSTVCL). Zn(2+) is bound by residues Cys200, Cys215, Cys218, and Cys221.

It belongs to the QueC family. Zn(2+) serves as cofactor.

The catalysed reaction is 7-carboxy-7-deazaguanine + NH4(+) + ATP = 7-cyano-7-deazaguanine + ADP + phosphate + H2O + H(+). Its pathway is purine metabolism; 7-cyano-7-deazaguanine biosynthesis. Catalyzes the ATP-dependent conversion of 7-carboxy-7-deazaguanine (CDG) to 7-cyano-7-deazaguanine (preQ(0)). In Parvibaculum lavamentivorans (strain DS-1 / DSM 13023 / NCIMB 13966), this protein is 7-cyano-7-deazaguanine synthase.